A 143-amino-acid polypeptide reads, in one-letter code: Transcriptional regulator MraZ (143 aa).

2 consecutive SpoVT-AbrB domains span residues 5–47 (QYEH…SLDE) and 76–119 (AVEC…SKEV).

This sequence belongs to the MraZ family. In terms of assembly, forms oligomers.

The protein localises to the cytoplasm. It localises to the nucleoid. In Caldanaerobacter subterraneus subsp. tengcongensis (strain DSM 15242 / JCM 11007 / NBRC 100824 / MB4) (Thermoanaerobacter tengcongensis), this protein is Transcriptional regulator MraZ.